Reading from the N-terminus, the 500-residue chain is Cytochrome P450 monooxygenase ausI (500 aa).

A helical transmembrane segment spans residues 8 to 28; it reads LALLGQPLVPGLMVVSAILYL. Cys-440 contacts heme.

The protein belongs to the cytochrome P450 family. Requires heme as cofactor.

It is found in the membrane. Its pathway is secondary metabolite biosynthesis; terpenoid biosynthesis. Its function is as follows. Cytochrome P450 monooxygenase; part of the gene cluster B that mediates the biosynthesis of the fungal meroterpenoid acetoxydehydroaustin. The first step of the pathway is the synthesis of 3,5-dimethylorsellinic acid by the polyketide synthase ausA. 3,5-dimethylorsellinic acid is then prenylated by the polyprenyl transferase ausN. Further epoxidation by the FAD-dependent monooxygenase ausM and cyclization by the probable terpene cyclase ausL lead to the formation of protoaustinoid A. Protoaustinoid A is then oxidized to spiro-lactone preaustinoid A3 by the combined action of the FAD-binding monooxygenases ausB and ausC, and the dioxygenase ausE. Acid-catalyzed keto-rearrangement and ring contraction of the tetraketide portion of preaustinoid A3 by ausJ lead to the formation of preaustinoid A4. The aldo-keto reductase ausK, with the help of ausH, is involved in the next step by transforming preaustinoid A4 into isoaustinone which is in turn hydroxylated by the P450 monooxygenase ausI to form austinolide. The cytochrome P450 monooxygenase ausG then modifies austinolide to austinol. Austinol is further acetylated to austin by the O-acetyltransferase ausP, which spontaneously changes to dehydroaustin. The cytochrome P450 monooxygenase then converts dehydroaustin is into 7-dehydrodehydroaustin. The hydroxylation catalyzed by ausR permits the second O-acetyltransferase ausQ to add an additional acetyl group to the molecule, leading to the formation of acetoxydehydroaustin. Due to genetic rearrangements of the clusters and the subsequent loss of some enzymes, the end product of the Penicillium brasilianum austinoid biosynthesis clusters is acetoxydehydroaustin. The chain is Cytochrome P450 monooxygenase ausI from Penicillium brasilianum.